A 790-amino-acid chain; its full sequence is Penicillin-binding protein 1A (790 aa).

The Cytoplasmic portion of the chain corresponds to 1 to 20 (MANVRKRRKKKNEHKALRLT). The helical; Signal-anchor for type II membrane protein transmembrane segment at 21 to 41 (FITLLMVFLFSCVAAAGVGLA) threads the bilayer. Residues 42–790 (MIKAAPPLDV…RKRKMIKPQI (749 aa)) are Extracellular-facing. Positions 61–230 (SVIYDDKNKL…PQSPSTFYNA (170 aa)) are transglycosylase. E100 acts as the Proton donor; for transglycosylase activity in catalysis. The tract at residues 363–656 (ASVSIVDYKT…AALIWKLIMG (294 aa)) is transpeptidase. The active-site Acyl-ester intermediate; for transpeptidase activity is S402. Residues 720 to 790 (NKDKDDDDDD…RKRKMIKPQI (71 aa)) form a disordered region. The segment covering 724–740 (DDDDDDKDKDKEDEEEN) has biased composition (acidic residues). Basic and acidic residues predominate over residues 741–779 (KDEKNEDKKEAKDNTKNKDKDKKKDNDRKIDMDKKPDSS). A compositionally biased stretch (basic residues) spans 780–790 (KRKRKMIKPQI).

This sequence in the N-terminal section; belongs to the glycosyltransferase 51 family. The protein in the C-terminal section; belongs to the transpeptidase family.

It is found in the cell membrane. The catalysed reaction is [GlcNAc-(1-&gt;4)-Mur2Ac(oyl-L-Ala-gamma-D-Glu-L-Lys-D-Ala-D-Ala)](n)-di-trans,octa-cis-undecaprenyl diphosphate + beta-D-GlcNAc-(1-&gt;4)-Mur2Ac(oyl-L-Ala-gamma-D-Glu-L-Lys-D-Ala-D-Ala)-di-trans,octa-cis-undecaprenyl diphosphate = [GlcNAc-(1-&gt;4)-Mur2Ac(oyl-L-Ala-gamma-D-Glu-L-Lys-D-Ala-D-Ala)](n+1)-di-trans,octa-cis-undecaprenyl diphosphate + di-trans,octa-cis-undecaprenyl diphosphate + H(+). It catalyses the reaction Preferential cleavage: (Ac)2-L-Lys-D-Ala-|-D-Ala. Also transpeptidation of peptidyl-alanyl moieties that are N-acyl substituents of D-alanine.. The protein operates within cell wall biogenesis; peptidoglycan biosynthesis. Its function is as follows. Cell wall formation. Synthesis of cross-linked peptidoglycan from the lipid intermediates. The enzyme has a penicillin-insensitive transglycosylase N-terminal domain (formation of linear glycan strands) and a penicillin-sensitive transpeptidase C-terminal domain (cross-linking of the peptide subunits). The polypeptide is Penicillin-binding protein 1A (pbpA) (Clostridium tetani (strain Massachusetts / E88)).